Consider the following 89-residue polypeptide: Small ribosomal subunit protein uS15 (89 aa).

Residues 1-25 (MSLDTTEKQQLINTHQTHGTDTGSA) are disordered. Residues 8–25 (KQQLINTHQTHGTDTGSA) show a composition bias toward polar residues.

It belongs to the universal ribosomal protein uS15 family. Part of the 30S ribosomal subunit. Forms a bridge to the 50S subunit in the 70S ribosome, contacting the 23S rRNA.

One of the primary rRNA binding proteins, it binds directly to 16S rRNA where it helps nucleate assembly of the platform of the 30S subunit by binding and bridging several RNA helices of the 16S rRNA. Its function is as follows. Forms an intersubunit bridge (bridge B4) with the 23S rRNA of the 50S subunit in the ribosome. In Parasynechococcus marenigrum (strain WH8102), this protein is Small ribosomal subunit protein uS15.